A 318-amino-acid polypeptide reads, in one-letter code: Pantothenate kinase (318 aa).

96 to 103 is an ATP binding site; that stretch reads GSVSVGKS.

This sequence belongs to the prokaryotic pantothenate kinase family.

It localises to the cytoplasm. It carries out the reaction (R)-pantothenate + ATP = (R)-4'-phosphopantothenate + ADP + H(+). It participates in cofactor biosynthesis; coenzyme A biosynthesis; CoA from (R)-pantothenate: step 1/5. This chain is Pantothenate kinase, found in Bradyrhizobium sp. (strain BTAi1 / ATCC BAA-1182).